The following is a 67-amino-acid chain: ATP synthase F(0) complex subunit 8 (67 aa).

The helical transmembrane segment at 8–24 (TWFITILSMLITLFILF) threads the bilayer. Lys54 is modified (N6-acetyllysine; alternate). Lys54 bears the N6-succinyllysine; alternate mark. Lys57 is modified (N6-acetyllysine).

The protein belongs to the ATPase protein 8 family. In terms of assembly, component of the ATP synthase complex composed at least of ATP5F1A/subunit alpha, ATP5F1B/subunit beta, ATP5MC1/subunit c (homooctomer), MT-ATP6/subunit a, MT-ATP8/subunit 8, ATP5ME/subunit e, ATP5MF/subunit f, ATP5MG/subunit g, ATP5MK/subunit k, ATP5MJ/subunit j, ATP5F1C/subunit gamma, ATP5F1D/subunit delta, ATP5F1E/subunit epsilon, ATP5PF/subunit F6, ATP5PB/subunit b, ATP5PD/subunit d, ATP5PO/subunit OSCP. ATP synthase complex consists of a soluble F(1) head domain (subunits alpha(3) and beta(3)) - the catalytic core - and a membrane F(0) domain - the membrane proton channel (subunits c, a, 8, e, f, g, k and j). These two domains are linked by a central stalk (subunits gamma, delta, and epsilon) rotating inside the F1 region and a stationary peripheral stalk (subunits F6, b, d, and OSCP). Interacts with PRICKLE3.

Its subcellular location is the mitochondrion membrane. Its function is as follows. Subunit 8, of the mitochondrial membrane ATP synthase complex (F(1)F(0) ATP synthase or Complex V) that produces ATP from ADP in the presence of a proton gradient across the membrane which is generated by electron transport complexes of the respiratory chain. ATP synthase complex consist of a soluble F(1) head domain - the catalytic core - and a membrane F(1) domain - the membrane proton channel. These two domains are linked by a central stalk rotating inside the F(1) region and a stationary peripheral stalk. During catalysis, ATP synthesis in the catalytic domain of F(1) is coupled via a rotary mechanism of the central stalk subunits to proton translocation. In vivo, can only synthesize ATP although its ATP hydrolase activity can be activated artificially in vitro. Part of the complex F(0) domain. The polypeptide is ATP synthase F(0) complex subunit 8 (Dugong dugon (Dugong)).